A 144-amino-acid chain; its full sequence is Monooxygenase ptaG (144 aa).

This sequence belongs to the avfA family.

The protein operates within secondary metabolite biosynthesis. Functionally, monooxygenase; part of the gene cluster that mediates the biosynthesis of pestheic acid, a diphenyl ether which is a biosynthetic precursor of the unique chloropupukeananes. The biosynthesis initiates from condensation of acetate and malonate units catalyzed by the non-reducing PKS ptaA. As the ptaA protein is TE/CLC domain-deficient, hydrolysis and Claisen cyclization of the polyketide could be catalyzed by ptaB containing a beta-lactamase domain. The ptaB protein might hydrolyze the thioester bond between the ACP of ptaA and the intermediate to release atrochrysone carboxylic acid, which is spontaneously dehydrated to form endocrocin anthrone. Endocrocin anthrone is then converted to endocrocin, catalyzed by the anthrone oxygenase ptaC. Spontaneous decarboxylation of endocrocin occurs to generate emodin. An O-methyltransferase (ptaH or ptaI) could methylate emodin to form physcion. PtaJ could then catalyze the oxidative cleavage of physcion, and rotation of the intermediate could then afford desmethylisosulochrin. PtaF, a putative NADH-dependent oxidoreductase, might also participate in the oxidative cleavage step. Desmethylisosulochrin is then transformed by another O-methyltransferase (ptaH or ptaI) to form isosulochrin. Chlorination of isosulochrin by ptaM in the cyclohexadienone B ring then produces chloroisosulochrin. PtaE is responsible for the oxidative coupling reactions of both benzophenones isosulochrin and chloroisosulochrin to RES-1214-1 and pestheic acid respectively, regardless of chlorination. The sequence is that of Monooxygenase ptaG from Pestalotiopsis fici (strain W106-1 / CGMCC3.15140).